The chain runs to 548 residues: Spindle pole body-associated protein cut12 (548 aa).

The interaction with plo1 stretch occupies residues 122-325 (FKSPLLQSTP…GQQSKYKGKE (204 aa)). Residues 123–182 (KSPLLQSTPKPNINNPDNENKSKHDEFDNRYNININESYKNETKSNQRLGEDVPSKKKYP) form a disordered region. The segment covering 126–139 (LLQSTPKPNINNPD) has biased composition (polar residues). 2 stretches are compositionally biased toward basic and acidic residues: residues 140–151 (NENKSKHDEFDN) and 161–182 (YKNE…KKYP). Residues 261–312 (KQKFSMLDSAHSDLELELTSIRERLESLILEKQEEINFWKQRCRALETEKIH) are a coiled coil. Residues 344–356 (PITTKVVSRPSQS) show a composition bias toward polar residues. Disordered regions lie at residues 344 to 369 (PITT…PSKN) and 510 to 548 (SRVD…QLNS). A coiled-coil region spans residues 522–548 (RTANAKKRLEERRRRRKLKLQELQLNS).

As to quaternary structure, self-associates. Interacts with plo1.

The protein resides in the cytoplasm. The protein localises to the cytoskeleton. It localises to the microtubule organizing center. Its subcellular location is the spindle pole body. In terms of biological role, required for bipolar spindle formation. May act as a regulator of the p34cdc2/cyclin B kinase. Required for full activation of the plo1 kinase. However, in cut12.1 cells at restrictive temperature the H1 kinase does rise concomitant with entry into mitosis, indicating that cut12 is not required for activation of p34cdc2/cyclin B. The cut12.s11 allele may promote cdc2-independent phosphorylation of SPB proteins thereby overcoming the requirement for cdc25 in cell cycle progression. The sequence is that of Spindle pole body-associated protein cut12 (cut12) from Schizosaccharomyces pombe (strain 972 / ATCC 24843) (Fission yeast).